A 456-amino-acid polypeptide reads, in one-letter code: Frizzled/smoothened-like sans CRD protein F (456 aa).

The first 30 residues, 1–30 (MIFNNLKNQNKIINFLIIFYFLSFLKQIES), serve as a signal peptide directing secretion. Residues 31 to 92 (QSINITSSSS…PFFTINEWNK (62 aa)) lie on the Extracellular side of the membrane. 3 N-linked (GlcNAc...) asparagine glycosylation sites follow: asparagine 34, asparagine 52, and asparagine 70. A helical transmembrane segment spans residues 93–113 (FLNMSLVMGTISFFSGLFLLV). Topologically, residues 114 to 127 (TYSPIVNKTHNRHT) are cytoplasmic. A helical membrane pass occupies residues 128-148 (IGVMCMSFGVCLAMCSDMWNF). Topologically, residues 149 to 174 (GSNFTEKSICPSPGQYLSTSNARCLS) are extracellular. Asparagine 151 carries an N-linked (GlcNAc...) asparagine glycan. Residues 175–195 (SGIFLQFGGVFGFLNWTLLSF) form a helical membrane-spanning segment. The Cytoplasmic portion of the chain corresponds to 196-211 (DLFMNIKGIITKNYDK). The chain crosses the membrane as a helical span at residues 212–232 (YYVSGTFIIAIIFTFVPIVND). Over 233–252 (QYSMSYIGLGCWLGSAMYQL) the chain is Extracellular. Residues 253-273 (IFFWILLSICLIVSSVFIILI) form a helical membrane-spanning segment. Topologically, residues 274 to 297 (LKEVYIIIKLSKQKTSLKGNIRPL) are cytoplasmic. A helical transmembrane segment spans residues 298–318 (ICISITGFAFFYMFFYYISIV). Residues 319–354 (VEGDYYERVLNEYTDCLMDPTKDISECKSPRMSVAS) are Extracellular-facing. A helical membrane pass occupies residues 355–375 (EFVFLLCLRLLGIGAFIFYGI). Topologically, residues 376–456 (NNKVKKIWLN…ESSLNSVDEI (81 aa)) are cytoplasmic. A disordered region spans residues 403–422 (ADNDKSNSNGSKVLYRTNNT).

Belongs to the G-protein coupled receptor Fz/Smo family.

The protein resides in the membrane. The chain is Frizzled/smoothened-like sans CRD protein F (fscF) from Dictyostelium discoideum (Social amoeba).